Here is a 127-residue protein sequence, read N- to C-terminus: Large ribosomal subunit protein bL17 (127 aa).

Belongs to the bacterial ribosomal protein bL17 family. As to quaternary structure, part of the 50S ribosomal subunit. Contacts protein L32.

The polypeptide is Large ribosomal subunit protein bL17 (Escherichia fergusonii (strain ATCC 35469 / DSM 13698 / CCUG 18766 / IAM 14443 / JCM 21226 / LMG 7866 / NBRC 102419 / NCTC 12128 / CDC 0568-73)).